The sequence spans 317 residues: Transaldolase (317 aa).

Residue K126 is the Schiff-base intermediate with substrate of the active site.

This sequence belongs to the transaldolase family. Type 1 subfamily. As to quaternary structure, homodimer.

Its subcellular location is the cytoplasm. It catalyses the reaction D-sedoheptulose 7-phosphate + D-glyceraldehyde 3-phosphate = D-erythrose 4-phosphate + beta-D-fructose 6-phosphate. Its pathway is carbohydrate degradation; pentose phosphate pathway; D-glyceraldehyde 3-phosphate and beta-D-fructose 6-phosphate from D-ribose 5-phosphate and D-xylulose 5-phosphate (non-oxidative stage): step 2/3. Its function is as follows. Transaldolase is important for the balance of metabolites in the pentose-phosphate pathway. The sequence is that of Transaldolase from Paraburkholderia phytofirmans (strain DSM 17436 / LMG 22146 / PsJN) (Burkholderia phytofirmans).